Consider the following 146-residue polypeptide: NADH-quinone oxidoreductase subunit A (146 aa).

A run of 3 helical transmembrane segments spans residues 8-28 (FGSVFVFLLLGVIFVVGGYLT), 63-83 (FYVVALIFIIFDVEVVFLYPW), and 93-113 (FALIEVLVFAGILILGLAYAW).

The protein belongs to the complex I subunit 3 family. NDH-1 is composed of 14 different subunits. Subunits NuoA, H, J, K, L, M, N constitute the membrane sector of the complex.

The protein resides in the cell inner membrane. It carries out the reaction a quinone + NADH + 5 H(+)(in) = a quinol + NAD(+) + 4 H(+)(out). In terms of biological role, NDH-1 shuttles electrons from NADH, via FMN and iron-sulfur (Fe-S) centers, to quinones in the respiratory chain. The immediate electron acceptor for the enzyme in this species is believed to be a menaquinone. Couples the redox reaction to proton translocation (for every two electrons transferred, four hydrogen ions are translocated across the cytoplasmic membrane), and thus conserves the redox energy in a proton gradient. The sequence is that of NADH-quinone oxidoreductase subunit A from Chlorobium chlorochromatii (strain CaD3).